A 608-amino-acid chain; its full sequence is Aspartate--tRNA(Asp/Asn) ligase (608 aa).

L-aspartate is bound at residue E179. The segment at 203–206 (QLFK) is aspartate. R225 is a binding site for L-aspartate. Residues 225–227 (RDE) and Q234 each bind ATP. Position 461 (H461) interacts with L-aspartate. E494 contacts ATP. R501 is an L-aspartate binding site. An ATP-binding site is contributed by 546–549 (GLDR).

This sequence belongs to the class-II aminoacyl-tRNA synthetase family. Type 1 subfamily. In terms of assembly, homodimer.

It is found in the cytoplasm. The enzyme catalyses tRNA(Asx) + L-aspartate + ATP = L-aspartyl-tRNA(Asx) + AMP + diphosphate. Its function is as follows. Aspartyl-tRNA synthetase with relaxed tRNA specificity since it is able to aspartylate not only its cognate tRNA(Asp) but also tRNA(Asn). Reaction proceeds in two steps: L-aspartate is first activated by ATP to form Asp-AMP and then transferred to the acceptor end of tRNA(Asp/Asn). In Psychrobacter arcticus (strain DSM 17307 / VKM B-2377 / 273-4), this protein is Aspartate--tRNA(Asp/Asn) ligase.